We begin with the raw amino-acid sequence, 188 residues long: Probable nicotinate-nucleotide adenylyltransferase (188 aa).

This sequence belongs to the NadD family.

The catalysed reaction is nicotinate beta-D-ribonucleotide + ATP + H(+) = deamido-NAD(+) + diphosphate. Its pathway is cofactor biosynthesis; NAD(+) biosynthesis; deamido-NAD(+) from nicotinate D-ribonucleotide: step 1/1. In terms of biological role, catalyzes the reversible adenylation of nicotinate mononucleotide (NaMN) to nicotinic acid adenine dinucleotide (NaAD). The polypeptide is Probable nicotinate-nucleotide adenylyltransferase (Salinispora arenicola (strain CNS-205)).